A 513-amino-acid chain; its full sequence is GTPase Obg (513 aa).

In terms of domain architecture, Obg spans 3-160 (THFVDRVVVH…LDLHLEVKTL (158 aa)). One can recognise an OBG-type G domain in the interval 161 to 337 (ADVALVGFPS…LSFAMAELVS (177 aa)). Residues 167 to 174 (GFPSAGKS), 192 to 196 (FTTLV), 213 to 216 (DVPG), 289 to 292 (NKAD), and 318 to 320 (SAV) contribute to the GTP site. Positions 174 and 194 each coordinate Mg(2+). The 90-residue stretch at 355–444 (PRAVDDQGFK…ANAVVFDWEP (90 aa)) folds into the OCT domain. The disordered stretch occupies residues 457–513 (GSDLRLEDHSRPTRDEKRLQERERRAAKVTARDELEAERRAGHWTAADEADEELSQR). The span at 458 to 497 (SDLRLEDHSRPTRDEKRLQERERRAAKVTARDELEAERRA) shows a compositional bias: basic and acidic residues. The segment covering 504 to 513 (DEADEELSQR) has biased composition (acidic residues).

It belongs to the TRAFAC class OBG-HflX-like GTPase superfamily. OBG GTPase family. As to quaternary structure, monomer. Mg(2+) is required as a cofactor.

The protein resides in the cytoplasm. Functionally, an essential GTPase which binds GTP, GDP and possibly (p)ppGpp with moderate affinity, with high nucleotide exchange rates and a fairly low GTP hydrolysis rate. Plays a role in control of the cell cycle, stress response, ribosome biogenesis and in those bacteria that undergo differentiation, in morphogenesis control. This chain is GTPase Obg, found in Kineococcus radiotolerans (strain ATCC BAA-149 / DSM 14245 / SRS30216).